Reading from the N-terminus, the 243-residue chain is 3-deoxy-manno-octulosonate cytidylyltransferase (243 aa).

The protein belongs to the KdsB family.

Its subcellular location is the cytoplasm. The enzyme catalyses 3-deoxy-alpha-D-manno-oct-2-ulosonate + CTP = CMP-3-deoxy-beta-D-manno-octulosonate + diphosphate. The protein operates within nucleotide-sugar biosynthesis; CMP-3-deoxy-D-manno-octulosonate biosynthesis; CMP-3-deoxy-D-manno-octulosonate from 3-deoxy-D-manno-octulosonate and CTP: step 1/1. Its pathway is bacterial outer membrane biogenesis; lipopolysaccharide biosynthesis. Its function is as follows. Activates KDO (a required 8-carbon sugar) for incorporation into bacterial lipopolysaccharide in Gram-negative bacteria. The sequence is that of 3-deoxy-manno-octulosonate cytidylyltransferase from Bartonella quintana (strain Toulouse) (Rochalimaea quintana).